The primary structure comprises 278 residues: HTH-type transcriptional activator RhaS (278 aa).

Residues 174-272 enclose the HTH araC/xylS-type domain; the sequence is NQLLAWLEDH…DWSPRDIRQG (99 aa). 2 consecutive DNA-binding regions (H-T-H motif) follow at residues 191 to 212 and 239 to 262; these read ESIADKFSLSLRTLHRQLKQQT and VTDIAYRCGFGDSNHFSTLFRREF.

Binds DNA as a dimer.

The protein resides in the cytoplasm. Its function is as follows. Activates expression of the rhaBAD and rhaT operons. This Citrobacter koseri (strain ATCC BAA-895 / CDC 4225-83 / SGSC4696) protein is HTH-type transcriptional activator RhaS.